We begin with the raw amino-acid sequence, 864 residues long: Xylosyltransferase 2 (864 aa).

Residues methionine 1–lysine 15 lie on the Cytoplasmic side of the membrane. A helical; Signal-anchor for type II membrane protein transmembrane segment spans residues leucine 16–serine 36. At glycine 37–arginine 864 the chain is on the lumenal side. Disordered stretches follow at residues glutamate 39–leucine 123 and alanine 136–phenylalanine 158. Basic and acidic residues predominate over residues arginine 53 to aspartate 65. Positions serine 73–arginine 82 are enriched in basic residues. Asparagine 122 is a glycosylation site (N-linked (GlcNAc...) asparagine). 4 disulfides stabilise this stretch: cysteine 162–cysteine 190, cysteine 206–cysteine 448, cysteine 467–cysteine 480, and cysteine 469–cysteine 478. UDP-alpha-D-xylose contacts are provided by residues valine 239, aspartate 267, and threonine 296–tryptophan 298. The N-linked (GlcNAc...) asparagine glycan is linked to asparagine 327. Aspartate 400 to tryptophan 401 provides a ligand contact to UDP-alpha-D-xylose. Residues serine 481 and arginine 504 to lysine 505 each bind UDP-alpha-D-xylose. 2 disulfide bridges follow: cysteine 580-cysteine 832 and cysteine 825-cysteine 838. Asparagine 682 carries an N-linked (GlcNAc...) asparagine glycan.

It belongs to the glycosyltransferase 14 family. XylT subfamily. As to quaternary structure, monomer. Mg(2+) is required as a cofactor. It depends on Mn(2+) as a cofactor. In terms of processing, contains disulfide bonds.

It is found in the golgi apparatus membrane. The protein localises to the secreted. The enzyme catalyses UDP-alpha-D-xylose + L-seryl-[protein] = 3-O-(beta-D-xylosyl)-L-seryl-[protein] + UDP + H(+). The protein operates within glycan metabolism; chondroitin sulfate biosynthesis. Its pathway is glycan metabolism; heparan sulfate biosynthesis. Functionally, catalyzes the first step in the biosynthesis of chondroitin sulfate, heparan sulfate and dermatan sulfate proteoglycans, such as DCN. Transfers D-xylose from UDP-D-xylose to specific serine residues of the core protein. The protein is Xylosyltransferase 2 (Xylt2) of Rattus norvegicus (Rat).